Reading from the N-terminus, the 238-residue chain is Probable succinyl-CoA:3-ketoacid coenzyme A transferase subunit A (238 aa).

24–30 (GGFGLCG) is a CoA binding site.

This sequence belongs to the 3-oxoacid CoA-transferase subunit A family. Heterodimer of a subunit A and a subunit B.

The enzyme catalyses a 3-oxo acid + succinyl-CoA = a 3-oxoacyl-CoA + succinate. This chain is Probable succinyl-CoA:3-ketoacid coenzyme A transferase subunit A (scoA), found in Bacillus subtilis (strain 168).